A 388-amino-acid chain; its full sequence is Protein kes1 (388 aa).

The protein belongs to the OSBP family.

Lipid transporter involved in lipid countertransport between the Golgi complex and membranes of the endoplasmic reticulum: specifically exchanges sterol with phosphatidylinositol 4-phosphate (PI4P), delivering sterol to the Golgi in exchange for PI4P, which is degraded by the SAC1 phosphatase in the endoplasmic reticulum. In Schizosaccharomyces pombe (strain 972 / ATCC 24843) (Fission yeast), this protein is Protein kes1 (kes1).